The following is a 636-amino-acid chain: MGKIIGIDLGTTNSCVAVLDGDKPRVIENAEGERTTPSVIAYTDGETLVGQPAKRQAVTNPENTLFAIKRLIGRRFEDEEVQRDIEIMPYKIVKADNGDAWVEAKGQKMAAPQVSAEVLKKMKKTAEDFLGEEVTGAVITVPAYFNDAQRQATKDAGRIAGLEVKRIINEPTAAALAYGLDKQGGDRTIAVYDLGGGTFDISIIEIDEVEGEKTFEVLATNGDTHLGGEDFDNRLINYLVAEFKKDQGIDLKNDPLAMQRVKEAAEKAKIELSSTNQTDVNLPYITADATGPKHMNIKVTRAKLESLVEDLVQRSLEPLKVALADADLSVGDITDVILVGGQTRMPMVQAKVTEFFGKEPRRDVNPDEAVAVGAAVQGGVLAGDVKDVLLLDVTPLSLGIETMGGVMTKLVEKNTTIPTKANQVFSTAEDNQSAVTIHVLQGERKQAMYNKSLGQFNLEGINPAPRGMPQIEVTFDLDADGILHVSAKDKQTGKEQKITIQASGGLSDAEIEKMVQEAEANKEADKKFEELATARNQADQIIHGTRKQVEEAGEALPADEKAKIETAISELEEARKGEDKEAIEAKIQALMAAAQKLMEIAQQQAQAQQGSAEAGAQSQEDDVVDAEFEEVKDDKK.

T198 is subject to Phosphothreonine; by autocatalysis. A disordered region spans residues 600 to 636; that stretch reads IAQQQAQAQQGSAEAGAQSQEDDVVDAEFEEVKDDKK. A compositionally biased stretch (low complexity) spans 601 to 618; the sequence is AQQQAQAQQGSAEAGAQS. Residues 619–636 are compositionally biased toward acidic residues; that stretch reads QEDDVVDAEFEEVKDDKK.

Belongs to the heat shock protein 70 family.

In terms of biological role, acts as a chaperone. The polypeptide is Chaperone protein DnaK (Vibrio vulnificus (strain CMCP6)).